The sequence spans 86 residues: U13-theraphotoxin-Cg1b (86 aa).

The signal sequence occupies residues 1-21 (MKVSVLITLAVLGVMFVWASA). The propeptide occupies 22-51 (AELEQSGSDQKDSPAWLKSMERIFQSEERE). Cystine bridges form between Cys-52–Cys-66, Cys-59–Cys-71, and Cys-65–Cys-78.

Belongs to the neurotoxin 10 (Hwtx-1) family. 41 (Jztx-36) subfamily. In terms of tissue distribution, expressed by the venom gland.

Its subcellular location is the secreted. Functionally, probable ion channel inhibitor. This Chilobrachys guangxiensis (Chinese earth tiger tarantula) protein is U13-theraphotoxin-Cg1b.